Consider the following 333-residue polypeptide: Serine/threonine-protein phosphatase PP1-beta (333 aa).

Residues Asp63, His65, Asp91, and Asn123 each contribute to the Mn(2+) site. His124 serves as the catalytic Proton donor. The Mn(2+) site is built by His172 and His247. The interval 306–333 is disordered; the sequence is GAGGVGSNRPVTPPRNAPAAQPKKGAKK. Residues 322–333 show a composition bias toward low complexity; the sequence is APAAQPKKGAKK.

This sequence belongs to the PPP phosphatase family. PP-1 subfamily. In terms of assembly, interacts with lab-1; the interaction is direct. Interacts with knl-1; the interaction is direct. It depends on Mn(2+) as a cofactor. Expressed in gonads, nervous system, intestine and muscles.

Its subcellular location is the cytoplasm. It localises to the nucleus. It catalyses the reaction O-phospho-L-seryl-[protein] + H2O = L-seryl-[protein] + phosphate. The enzyme catalyses O-phospho-L-threonyl-[protein] + H2O = L-threonyl-[protein] + phosphate. Its activity is regulated as follows. Inhibited by okadaic acid. In terms of biological role, serine/threonine-protein phosphatase essential for chromosomal dynamics during meiosis and mitosis. During meiosis, promotes chromosomal cohesion and germline immortality via a small RNA-mediated genome silencing pathway. Antagonizes the function of air-2 kinase during meiosis I and mitosis to promote chromatid cohesion and spindle attachment. Dephosphorylates histone H3 at 'Ser-10'. Dephosphorylates histone H3 at 'Thr-3'. Also involved in the activation of chloride channel clh-3 during cell swelling and meiotic maturation. Promotes small RNA-mediated genome silencing over multiple generations. Essential for embryogenesis. This is Serine/threonine-protein phosphatase PP1-beta from Caenorhabditis elegans.